A 140-amino-acid polypeptide reads, in one-letter code: MEGDQYLASFNFPAMERKPKVAGLAVLLGEVSELELQKICFNRSLRNEINQLEEQNDISFVRVERKGVYGGVYLSYRVASAKDCEKLAKYYNLKASQRGYKPLSQADINEAMNRFHYVDPLAVVDGERIVQKPSRTKANI.

Residues 27–65 (LLGEVSELELQKICFNRSLRNEINQLEEQNDISFVRVER) are a coiled coil.

This is an uncharacterized protein from Pasteurella multocida (strain Pm70).